A 57-amino-acid polypeptide reads, in one-letter code: MCRLYAIILIVLVMNVIMTIIPDSKVEVVSCEDCPEHCSTQKARAKCDNDKCVCEPI.

An N-terminal signal peptide occupies residues 1 to 19 (MCRLYAIILIVLVMNVIMT). Residues 20-28 (IIPDSKVEV) constitute a propeptide that is removed on maturation. Intrachain disulfides connect C31/C47, C34/C52, and C38/C54.

This sequence belongs to the short scorpion toxin superfamily. Potassium channel inhibitor family. Alpha-KTx 08 subfamily. Post-translationally, contains 3 disulfide bonds. In terms of tissue distribution, expressed by the venom gland.

It is found in the secreted. Its function is as follows. Selectively inhibits voltage-gated potassium channels rKv1.2/KCNA2 (IC(50)=331 nM) and hKv1.3/KCNA3 (IC(50)=503 nM). Partially inihibts rKv1.6/KCNA6 (IC(50)=9983 nM). This chain is Potassium channel toxin alpha-KTx 8.8, found in Orthochirus scrobiculosus (Central Asian scorpion).